Here is a 670-residue protein sequence, read N- to C-terminus: Probable Na(+)/H(+) antiporter nhx-3 (670 aa).

The next 8 helical transmembrane spans lie at 41–61, 73–93, 97–117, 129–149, 164–184, 192–212, 235–255, and 268–288; these read VYVITTWLLVASLAKILFNLM, LLIIVGLGLGYFLNQTTLSGV, SHAFFLYLLPPIIFDAGYFMP, LVFSVLGTLWNTFAIGGSLLI, EILVFSALISAVDPVAVIAIF, FLFINVFGEALFNDGVTVVLY, GLSFFVVALGGAAIGIIFAIA, and ILAPVFIFLLPYMAYLTAEMV. Residue asparagine 310 is glycosylated (N-linked (GlcNAc...) asparagine). Transmembrane regions (helical) follow at residues 325–345, 351–371, 390–410, and 418–438; these read MLAQCSETVIFMFLGLSTLTS, FIFIGATLVFCLIYRAIGIIV, FILSYGGLRGAIAYGLVVSIP, and MFITTTICVIYFTVFLQGITI. A disordered region spans residues 648–670; that stretch reads GDLKGHCGTSRKPKHSMFELRHV.

Belongs to the monovalent cation:proton antiporter 1 (CPA1) transporter (TC 2.A.36) family. Phosphorylated. As to expression, expressed in hypodermal cells of the main body syncytium, ut1 cells of the vulva and the spermathecal junction cell.

It is found in the endomembrane system. Functionally, plays a role in epithelial membrane transport processes. The polypeptide is Probable Na(+)/H(+) antiporter nhx-3 (nhx-3) (Caenorhabditis elegans).